Here is a 327-residue protein sequence, read N- to C-terminus: Biotin synthase (327 aa).

A Radical SAM core domain is found at Phe44–Arg273. [4Fe-4S] cluster is bound by residues Cys62, Cys66, and Cys69. [2Fe-2S] cluster is bound by residues Cys138, Cys198, and Arg268.

It belongs to the radical SAM superfamily. Biotin synthase family. In terms of assembly, homodimer. Requires [4Fe-4S] cluster as cofactor. The cofactor is [2Fe-2S] cluster.

It carries out the reaction (4R,5S)-dethiobiotin + (sulfur carrier)-SH + 2 reduced [2Fe-2S]-[ferredoxin] + 2 S-adenosyl-L-methionine = (sulfur carrier)-H + biotin + 2 5'-deoxyadenosine + 2 L-methionine + 2 oxidized [2Fe-2S]-[ferredoxin]. The protein operates within cofactor biosynthesis; biotin biosynthesis; biotin from 7,8-diaminononanoate: step 2/2. In terms of biological role, catalyzes the conversion of dethiobiotin (DTB) to biotin by the insertion of a sulfur atom into dethiobiotin via a radical-based mechanism. The protein is Biotin synthase of Parabacteroides distasonis (strain ATCC 8503 / DSM 20701 / CIP 104284 / JCM 5825 / NCTC 11152).